Reading from the N-terminus, the 452-residue chain is NADH-ubiquinone oxidoreductase chain 4 (452 aa).

Helical transmembrane passes span 4–24, 29–49, 59–79, 88–110, 114–136, 144–164, 182–202, 221–241, 252–272, 282–304, 309–331, 345–365, 390–410, and 432–452; these read LVLGYVGLVIGVIVTKKSMVW, VGSVLLMLPATVLVNMNMTIS, FVSLGLTVLSIWLLPLMLLAS, LIYQRVFVGCQVFLTGALVLAFM, LLLFYIAFESTLLPTLMLITRWG, AGTYFMFFTLVGSLPLLICLI, VFQLSYLVNFWWVGCILAFLV, PIAGSMVLAGVLLKLGGYGMM, MLSSEVFLALALWGIVVMGGI, LIAYSSVGHMALVVGGVLTGVAW, AMVLMIAHGLVSSCLFCLANLWY, LIMIFPLISSGWFLMSLMNMA, IVYMSLGAVLTAAYSLYLFGM, and LLTTLHLVPAIYLIFYLGLMF.

Belongs to the complex I subunit 4 family.

The protein resides in the mitochondrion membrane. It carries out the reaction a ubiquinone + NADH + 5 H(+)(in) = a ubiquinol + NAD(+) + 4 H(+)(out). Its function is as follows. Core subunit of the mitochondrial membrane respiratory chain NADH dehydrogenase (Complex I) that is believed to belong to the minimal assembly required for catalysis. Complex I functions in the transfer of electrons from NADH to the respiratory chain. The immediate electron acceptor for the enzyme is believed to be ubiquinone. The sequence is that of NADH-ubiquinone oxidoreductase chain 4 (ND4) from Branchiostoma floridae (Florida lancelet).